Reading from the N-terminus, the 196-residue chain is Large ribosomal subunit protein eL15 (196 aa).

Disordered stretches follow at residues 72 to 93 (SARK…TRIT) and 163 to 196 (GLTG…GKGK).

This sequence belongs to the eukaryotic ribosomal protein eL15 family. As to quaternary structure, part of the 50S ribosomal subunit. Interacts with protein L7Ae and weakly with L44e.

In Haloarcula marismortui (strain ATCC 43049 / DSM 3752 / JCM 8966 / VKM B-1809) (Halobacterium marismortui), this protein is Large ribosomal subunit protein eL15 (rpl15e).